The chain runs to 365 residues: Cytochrome P450 71A3 (365 aa).

The protein belongs to the cytochrome P450 family. The cofactor is heme.

Functionally, may have a role in maturation, such as during flavor formation or other metabolite production specific to aging tissues. The chain is Cytochrome P450 71A3 (CYP71A3) from Solanum melongena (Eggplant).